The chain runs to 87 residues: Cytochrome c oxidase subunit 6B1 (87 aa).

In terms of domain architecture, CHCH spans 28-74; it reads TRNCWQNYLDFHRCQKAMTTKGGNVSVCEWYQRVYQSLCPTSWVTDW. The Cx9C motif motif lies at 31 to 41; the sequence is CWQNYLDFHRC. Intrachain disulfides connect C31-C66 and C41-C55. The Cx10C motif signature appears at 55 to 66; the sequence is CEWYQRVYQSLC.

It localises to the mitochondrion intermembrane space. In terms of biological role, connects the two COX monomers into the physiological dimeric form. The protein is Cytochrome c oxidase subunit 6B1 (COX6B1) of Macaca fascicularis (Crab-eating macaque).